The following is an 831-amino-acid chain: Glucan 1,3-beta-glucosidase D (831 aa).

Over residues 1–21 the composition is skewed to basic and acidic residues; the sequence is MPSQSRSRDRYGRDSDRDRSR. Disordered stretches follow at residues 1 to 246 and 261 to 288; these read MPSQ…RGQS and APDM…SDGS. Topologically, residues 1–300 are cytoplasmic; it reads MPSQSRSRDR…LTPFWKRKKW (300 aa). The segment covering 32 to 41 has biased composition (acidic residues); it reads EDDDDDDDFD. Basic and acidic residues-rich tracts occupy residues 42-70, 78-94, and 151-177; these read DNPR…HDDY, EPRR…ERAR, and DAAR…HKST. Over residues 178–195 the composition is skewed to low complexity; the sequence is DSSNSSAGLLNANALAKL. 2 stretches are compositionally biased toward basic and acidic residues: residues 197-216 and 275-286; these read AQHE…EAKA and PPRERRWEKDSD. A helical; Signal-anchor for type II membrane protein transmembrane segment spans residues 301-321; sequence WWIGAIVLVIVVIIIVVAVVV. The Extracellular portion of the chain corresponds to 322–831; the sequence is SNNKKSDSDS…PSFGNLPEYY (510 aa). The segment at 325–360 is disordered; it reads KKSDSDSDSDSNSGSSDSWGGDKSSLNGLDHDSIPK. Positions 334–350 are enriched in low complexity; the sequence is DSNSGSSDSWGGDKSSL. Residues Asn379, Asn396, and Asn547 are each glycosylated (N-linked (GlcNAc...) asparagine). Residue Glu598 is the Proton donor of the active site. Asn611, Asn637, Asn670, and Asn690 each carry an N-linked (GlcNAc...) asparagine glycan. The Nucleophile role is filled by Glu703.

The protein belongs to the glycosyl hydrolase 5 (cellulase A) family.

It localises to the cell membrane. The catalysed reaction is Successive hydrolysis of beta-D-glucose units from the non-reducing ends of (1-&gt;3)-beta-D-glucans, releasing alpha-glucose.. Glucosidase involved in the degradation of cellulosic biomass. Active on lichenan. The chain is Glucan 1,3-beta-glucosidase D (exgD) from Emericella nidulans (strain FGSC A4 / ATCC 38163 / CBS 112.46 / NRRL 194 / M139) (Aspergillus nidulans).